A 163-amino-acid polypeptide reads, in one-letter code: Phosphopantetheine adenylyltransferase (163 aa).

S9 contributes to the substrate binding site. ATP-binding positions include 9–10 (SF) and H17. Residues K41, I75, and R89 each coordinate substrate. ATP is bound by residues 90–92 (GIR), E100, and 125–131 (HLYVRSD).

Belongs to the bacterial CoaD family. Homohexamer. The cofactor is Mg(2+).

It is found in the cytoplasm. The enzyme catalyses (R)-4'-phosphopantetheine + ATP + H(+) = 3'-dephospho-CoA + diphosphate. Its pathway is cofactor biosynthesis; coenzyme A biosynthesis; CoA from (R)-pantothenate: step 4/5. In terms of biological role, reversibly transfers an adenylyl group from ATP to 4'-phosphopantetheine, yielding dephospho-CoA (dPCoA) and pyrophosphate. This Borrelia garinii subsp. bavariensis (strain ATCC BAA-2496 / DSM 23469 / PBi) (Borreliella bavariensis) protein is Phosphopantetheine adenylyltransferase.